Here is a 242-residue protein sequence, read N- to C-terminus: Uridylate kinase (242 aa).

Position 15 to 18 (15 to 18 (KLSG)) interacts with ATP. The tract at residues 23–28 (GDEGFG) is involved in allosteric activation by GTP. Glycine 57 is a binding site for UMP. ATP-binding residues include glycine 58 and arginine 62. UMP is bound by residues aspartate 77 and 138–145 (TGNPFCTT). Threonine 165, tyrosine 171, and aspartate 174 together coordinate ATP.

This sequence belongs to the UMP kinase family. Homohexamer.

The protein resides in the cytoplasm. It catalyses the reaction UMP + ATP = UDP + ADP. It participates in pyrimidine metabolism; CTP biosynthesis via de novo pathway; UDP from UMP (UMPK route): step 1/1. Its activity is regulated as follows. Allosterically activated by GTP. Inhibited by UTP. Its function is as follows. Catalyzes the reversible phosphorylation of UMP to UDP. In Shewanella sp. (strain MR-4), this protein is Uridylate kinase.